Reading from the N-terminus, the 456-residue chain is 3-isopropylmalate dehydratase large subunit (456 aa).

Residues cysteine 336, cysteine 396, and cysteine 399 each contribute to the [4Fe-4S] cluster site.

The protein belongs to the aconitase/IPM isomerase family. LeuC type 1 subfamily. Heterodimer of LeuC and LeuD. [4Fe-4S] cluster is required as a cofactor.

The enzyme catalyses (2R,3S)-3-isopropylmalate = (2S)-2-isopropylmalate. It participates in amino-acid biosynthesis; L-leucine biosynthesis; L-leucine from 3-methyl-2-oxobutanoate: step 2/4. In terms of biological role, catalyzes the isomerization between 2-isopropylmalate and 3-isopropylmalate, via the formation of 2-isopropylmaleate. The polypeptide is 3-isopropylmalate dehydratase large subunit (Staphylococcus aureus (strain JH1)).